A 133-amino-acid chain; its full sequence is uncharacterized protein (133 aa).

This is an uncharacterized protein from Caenorhabditis elegans.